The sequence spans 250 residues: Solute carrier family 66 member 2 (250 aa).

In terms of domain architecture, PQ-loop 1 spans 14–80 (RMLVSWGASC…HHFESPLLWQ (67 aa)). 6 consecutive transmembrane segments (helical) span residues 15–35 (MLVS…PYIP), 49–69 (FSIY…LFWF), 72–92 (HFES…LLML), 118–138 (FFWH…FTGV), 151–173 (LFVE…PQLY), and 212–232 (FSIC…QVYL). Positions 149-215 (SPLFVEILGF…NQAPFQFSIC (67 aa)) constitute a PQ-loop 2 domain.

Its subcellular location is the membrane. The chain is Solute carrier family 66 member 2 (slc66a2) from Xenopus laevis (African clawed frog).